The chain runs to 266 residues: Protein phosphatase 1 regulatory subunit 35 (266 aa).

Residues 1-10 (MMVYNGSQLE) show a composition bias toward polar residues. The segment at 1-118 (MMVYNGSQLE…QDLGTPVQQS (118 aa)) is disordered. Over residues 21–38 (PGPPPEPRAPEPGAPVPE) the composition is skewed to pro residues. 2 positions are modified to phosphoserine: S46 and S51. Over residues 62-79 (GRRKGRADRRGGARKGRQ) the composition is skewed to basic residues. A compositionally biased stretch (pro residues) spans 86–97 (PPSPVRSGPPPA).

Belongs to the PPP1R35 family. Interacts with PPP1CA; this interaction mediates the PPP1CA phosphatase activity inhibition. Interacts with RTTN; this interaction allows the mutual recruitment to the centriole.

It localises to the cytoplasm. It is found in the cytoskeleton. Its subcellular location is the microtubule organizing center. The protein localises to the centrosome. The protein resides in the centriole. During centriole duplication, plays a role in the centriole elongation by promoting the recruitment of the microtubule-binding elongation machinery through its interaction with RTTN, leading to the centriole to centrosome conversion. In addition may play a role in the primary cilia assembly. The chain is Protein phosphatase 1 regulatory subunit 35 from Bos taurus (Bovine).